The chain runs to 834 residues: Mannosyl-oligosaccharide glucosidase (834 aa).

The span at 1–10 (MARGERRRRA) shows a compositional bias: basic residues. Residues 1–37 (MARGERRRRAAAAEGARPLERARAAGRRDGRAGGARG) form a disordered region. The Cytoplasmic portion of the chain corresponds to 1–43 (MARGERRRRAAAAEGARPLERARAAGRRDGRAGGARGSASGAA). The Endoplasmic reticulum targeting motif lies at 3–9 (RGERRRR). Positions 17–31 (RPLERARAAGRRDGR) are enriched in basic and acidic residues. A helical; Signal-anchor for type II membrane protein transmembrane segment spans residues 44–64 (LAVVVLALAFGLSGRWVLAWL). The Lumenal segment spans residues 65–834 (RVRRALTLHP…LVLLIMAEEY (770 aa)). Positions 74-136 (PAPSALPPDS…GTPPKLRHTC (63 aa)) are required for endoplasmic reticulum targeting. The Proton donor role is filled by D580. An N-linked (GlcNAc...) asparagine glycan is attached at N654. E804 (proton acceptor) is an active-site residue.

Belongs to the glycosyl hydrolase 63 family.

It localises to the endoplasmic reticulum membrane. The catalysed reaction is N(4)-(alpha-D-Glc-(1-&gt;2)-alpha-D-Glc-(1-&gt;3)-alpha-D-Glc-(1-&gt;3)-alpha-D-Man-(1-&gt;2)-alpha-D-Man-(1-&gt;2)-alpha-D-Man-(1-&gt;3)-[alpha-D-Man-(1-&gt;2)-alpha-D-Man-(1-&gt;3)-[alpha-D-Man-(1-&gt;2)-alpha-D-Man-(1-&gt;6)]-alpha-D-Man-(1-&gt;6)]-beta-D-Man-(1-&gt;4)-beta-D-GlcNAc-(1-&gt;4)-beta-D-GlcNAc)-L-asparaginyl-[protein] + H2O = N(4)-(alpha-D-Glc-(1-&gt;3)-alpha-D-Glc-(1-&gt;3)-alpha-D-Man-(1-&gt;2)-alpha-D-Man-(1-&gt;2)-alpha-D-Man-(1-&gt;3)-[alpha-D-Man-(1-&gt;2)-alpha-D-Man-(1-&gt;3)-[alpha-D-Man-(1-&gt;2)-alpha-D-Man-(1-&gt;6)]-alpha-D-Man-(1-&gt;6)]-beta-D-Man-(1-&gt;4)-beta-D-GlcNAc-(1-&gt;4)-beta-D-GlcNAc)-L-asparaginyl-[protein] + beta-D-glucose. Its pathway is glycan metabolism; N-glycan degradation. With respect to regulation, inhibited by the deoxynojirimycin derivative N-9'-Methoxynonyl-1-Deoxynojirimycin. In the context of N-glycan degradation, cleaves the distal alpha 1,2-linked glucose residue from the Glc(3)Man(9)GlcNAc(2) oligosaccharide precursor in a highly specific manner. Functionally, (Microbial infection) Required for successful influenza or dengue virus infection; inhibition of its activity by a deoxynojirimycin derivative prevents death in mice infected with lethal doses of influenza or dengue viruses, even when administrated after infection. In Mus musculus (Mouse), this protein is Mannosyl-oligosaccharide glucosidase.